Consider the following 334-residue polypeptide: NAC domain-containing protein 66 (334 aa).

Residues 11 to 175 (VPPGFRFHPT…GWVVCRVFKK (165 aa)) enclose the NAC domain. A DNA-binding region spans residues 111-181 (IGMRKTLVFY…VFKKNNLCKN (71 aa)).

As to expression, mostly expressed in anthers. Also present in pollen, base of siliques and inflorescence stems.

The protein localises to the nucleus. In terms of biological role, transcription activator of genes involved in biosynthesis of secondary walls. Together with NST1, required for the secondary cell wall thickening of the anther endocethium, which is necessary for anther dehiscence. May also regulate the secondary cell wall lignification of other tissues such as tracheary elements. This Arabidopsis thaliana (Mouse-ear cress) protein is NAC domain-containing protein 66 (NAC066).